Here is a 244-residue protein sequence, read N- to C-terminus: Probable ABC transporter ATP-binding protein p29 (244 aa).

In terms of domain architecture, ABC transporter spans 6–241; the sequence is LVFDQVSLRY…KLTKQKLMQI (236 aa). Residue 38–45 coordinates ATP; that stretch reads GKSGVGKT.

Belongs to the ABC transporter superfamily.

In terms of biological role, part of a high-affinity transport system. The sequence is that of Probable ABC transporter ATP-binding protein p29 (p29) from Mycoplasma pneumoniae (strain ATCC 29342 / M129 / Subtype 1) (Mycoplasmoides pneumoniae).